A 133-amino-acid chain; its full sequence is MIVGLGSDLTDIRRIERMLARYGDRFVQRIFTDIERNRSESLQKKSSSYAKRFAAKEACAKALGTGIACGINWKDMGVINLPSGKPIMKLTNRAQMQLQKLLPSHHDAIIHLSMTDDFPWAQAFIIIEAFPRG.

Positions 8 and 57 each coordinate Mg(2+).

This sequence belongs to the P-Pant transferase superfamily. AcpS family. It depends on Mg(2+) as a cofactor.

The protein resides in the cytoplasm. It catalyses the reaction apo-[ACP] + CoA = holo-[ACP] + adenosine 3',5'-bisphosphate + H(+). Functionally, transfers the 4'-phosphopantetheine moiety from coenzyme A to a Ser of acyl-carrier-protein. In Bartonella henselae (strain ATCC 49882 / DSM 28221 / CCUG 30454 / Houston 1) (Rochalimaea henselae), this protein is Holo-[acyl-carrier-protein] synthase.